Here is a 184-residue protein sequence, read N- to C-terminus: Probable DNA-directed RNA polymerase subunit delta (184 aa).

The HTH HARE-type domain occupies 14–81 (LSMIEVARAI…GENVWALRSW (68 aa)). 2 disordered regions span residues 88 to 107 (DEEV…KHHK) and 118 to 184 (GDDD…DEDD). A compositionally biased stretch (acidic residues) spans 118–164 (GDDDIIDYDNDDPEDDDLDAATDDSDDDYSDDDSDYDEDNDDADDVL).

The protein belongs to the RpoE family. As to quaternary structure, RNAP is composed of a core of 2 alpha, a beta and a beta' subunits. The core is associated with a delta subunit and one of several sigma factors.

Functionally, participates in both the initiation and recycling phases of transcription. In the presence of the delta subunit, RNAP displays an increased specificity of transcription, a decreased affinity for nucleic acids, and an increased efficiency of RNA synthesis because of enhanced recycling. The polypeptide is Probable DNA-directed RNA polymerase subunit delta (Lactobacillus acidophilus (strain ATCC 700396 / NCK56 / N2 / NCFM)).